The following is a 1379-amino-acid chain: DNA-directed RNA polymerase subunit beta (1379 aa).

It belongs to the RNA polymerase beta chain family. The RNAP catalytic core consists of 2 alpha, 1 beta, 1 beta' and 1 omega subunit. When a sigma factor is associated with the core the holoenzyme is formed, which can initiate transcription.

The catalysed reaction is RNA(n) + a ribonucleoside 5'-triphosphate = RNA(n+1) + diphosphate. Functionally, DNA-dependent RNA polymerase catalyzes the transcription of DNA into RNA using the four ribonucleoside triphosphates as substrates. In Rhizobium leguminosarum bv. trifolii (strain WSM2304), this protein is DNA-directed RNA polymerase subunit beta.